Reading from the N-terminus, the 537-residue chain is MGMSEKASDTGMKGKKKDKNERNEKILNLTLEMIYLLTGEGYVIPKKKKSGDDMAPPQSCTDCILEGGCRCHVTNLTGGRALHAPGSVIQKENNKNDKKILELVSNIIQLLTGEEWEYIKRKKALYMEGIKEDPQQLSQWCEYEDKSIVMCNLEATACLNNDPRNDTVFCEHRDLSKFDTSLAEQSLPAIGIKGEPVSCEGANQSDCNINPLAEQIQGTDTPTPIMGCSLNNSLSDNYISNGIKTEATSCEAGNQSDYGNNPVAEVQLTDTTTPVKRCSLNSILSDNYIKIAIKEEPPSWEDENQTHCSINAPGEQNEEIDTPTSIMRFCLNSSLLDSSLLNAIKDDTLSCEGENYSDCSFNPLTEQTSPGCKQFTCSECGKTYTRLYNLKIHLKSHTDDKTFSCSECEECFTDHTDLVIHRRLHLTLKAFPCAECGKCFTNCTNLRAHSKTHTGEKPYSCTECGKTFRDRSHLNIHKKRHTGEKPYTCSECGKCFAYRSNLMVHVRIHTGEKPFSCSKCGKCFTDHANLIVHERMH.

Residues 1 to 21 (MGMSEKASDTGMKGKKKDKNE) are disordered. C2H2-type zinc fingers lie at residues 375–397 (FTCSECGKTYTRLYNLKIHLKSH), 403–425 (FSCSECEECFTDHTDLVIHRRLH), 431–453 (FPCAECGKCFTNCTNLRAHSKTH), 459–481 (YSCTECGKTFRDRSHLNIHKKRH), 487–509 (YTCSECGKCFAYRSNLMVHVRIH), and 515–537 (FSCSKCGKCFTDHANLIVHERMH).

This sequence belongs to the krueppel C2H2-type zinc-finger protein family.

It localises to the nucleus. Its function is as follows. May be involved in transcriptional regulation. The sequence is that of Oocyte zinc finger protein XlCOF29 from Xenopus laevis (African clawed frog).